The chain runs to 60 residues: QPLRKLCILHRNPGRCYQKIPAFYYNQKKKQCEGFTWSGCGGNSNRFKTIEECRRTCIRK.

The region spanning 7 to 57 is the BPTI/Kunitz inhibitor domain; sequence CILHRNPGRCYQKIPAFYYNQKKKQCEGFTWSGCGGNSNRFKTIEECRRTC. 3 disulfides stabilise this stretch: C7/C57, C16/C40, and C32/C53.

Belongs to the venom Kunitz-type family. In terms of tissue distribution, expressed by the venom gland.

The protein resides in the secreted. Serine protease inhibitor homolog that blocks voltage-gated potassium channels (Kv1.1/KCNA1, Kv1.2/KCNA2, and Kv1.6/KCNA6) (IC(50)=0.13-50 nM). The chain is Kunitz-type serine protease inhibitor homolog dendrotoxin I from Dendroaspis polylepis polylepis (Black mamba).